A 348-amino-acid polypeptide reads, in one-letter code: Rhodopsin (348 aa).

Position 1 is an N-acetylmethionine (methionine 1). Over 1–36 (MNGTEGPNFYVPFSNKTGVVRSPFEEPQYYLAEPWQ) the chain is Extracellular. Asparagine 2 and asparagine 15 each carry an N-linked (GlcNAc...) asparagine glycan. Residues 37–61 (FSCLAAYMFMLIVLGFPINFLTLYV) traverse the membrane as a helical segment. The Cytoplasmic portion of the chain corresponds to 62-73 (TIQHKKLRTPLN). A helical transmembrane segment spans residues 74-96 (YILLNLAIADLFMVFGGFTTTLY). Residues 97–110 (TSLHGYFVFGPTGC) lie on the Extracellular side of the membrane. The cysteines at positions 110 and 187 are disulfide-linked. A helical membrane pass occupies residues 111 to 133 (DLEGFFATLGGEIALWSLVVLAI). Positions 134 to 136 (ERY) match the 'Ionic lock' involved in activated form stabilization motif. Residues 134–152 (ERYIVVCKPMSNFRFGENH) are Cytoplasmic-facing. Residues 153 to 173 (AIMGVAFTWVMALACAAPPLV) form a helical membrane-spanning segment. At 174–202 (GWSRYIPEGMQCSCGIDYYTLKPEVNNES) the chain is on the extracellular side. Position 201 (glutamate 201) interacts with Zn(2+). The helical transmembrane segment at 203 to 224 (FVIYMFVVHFTIPMVVIFFCYG) threads the bilayer. The Cytoplasmic segment spans residues 225 to 252 (QLVFTVKEAAAQQQESATTQKAEKEVTR). The helical transmembrane segment at 253 to 274 (MVIIMVIAFLICWLPYAGVAFY) threads the bilayer. Residues 275–286 (IFTHQGSNFGPI) are Extracellular-facing. Position 279 (glutamine 279) interacts with Zn(2+). The chain crosses the membrane as a helical span at residues 287–308 (LMTLPAFFAKTSAVYNPVIYIM). An N6-(retinylidene)lysine modification is found at lysine 296. The Cytoplasmic portion of the chain corresponds to 309-348 (LNKQFRTCMLTTLCCGKIPLGDDEASATASKTETSQVAPA). S-palmitoyl cysteine attachment occurs at residues cysteine 322 and cysteine 323. Residues 330 to 348 (DDEASATASKTETSQVAPA) form an interaction with SAG region. Serine 334 is modified (phosphoserine). Threonine 336 carries the phosphothreonine modification. Position 338 is a phosphoserine (serine 338). Phosphothreonine is present on residues threonine 340 and threonine 342. Phosphoserine is present on serine 343.

It belongs to the G-protein coupled receptor 1 family. Opsin subfamily. Homodimer. May form a complex composed of RHO, GRK1 and RCVRN in a Ca(2+)-dependent manner; RCVRN prevents the interaction between GRK1 and RHO. Interacts with GRK1. Interacts (phosphorylated form) with SAG. Interacts with GNAT1. Interacts with GNAT3. SAG and G-proteins compete for a common binding site. Interacts with PRCD; the interaction promotes PRCD stability. Forms a complex with ASAP1 and ARF4. Forms a complex with ASAP1, RAB11A, Rabin8/RAB3IP, ARF4 and RAB11FIP3; the complex regulates Golgi-to-cilia rhodopsin/RHO transport in photoreceptors. Phosphorylated on some or all of the serine and threonine residues present in the C-terminal region. In terms of processing, contains one covalently linked retinal chromophore. Upon light absorption, the covalently bound 11-cis-retinal is converted to all-trans-retinal. After hydrolysis of the Schiff base and release of the covalently bound all-trans-retinal, active rhodopsin is regenerated by binding of a fresh molecule of 11-cis-retinal.

The protein localises to the membrane. It is found in the cell projection. The protein resides in the cilium. Its subcellular location is the photoreceptor outer segment. In terms of biological role, photoreceptor required for image-forming vision at low light intensity. Required for photoreceptor cell viability after birth. Light-induced isomerization of 11-cis to all-trans retinal triggers a conformational change that activates signaling via G-proteins. Subsequent receptor phosphorylation mediates displacement of the bound G-protein alpha subunit by the arrestin SAG and terminates signaling. The polypeptide is Rhodopsin (RHO) (Caluromys philander (Bare-tailed woolly opossum)).